The chain runs to 199 residues: uncharacterized protein (199 aa).

This is an uncharacterized protein from Borreliella burgdorferi (strain ATCC 35210 / DSM 4680 / CIP 102532 / B31) (Borrelia burgdorferi).